Consider the following 466-residue polypeptide: Xanthine permease XanQ (466 aa).

The Cytoplasmic portion of the chain corresponds to 1–44; that stretch reads MSDINHAGSDLIFELEDRPPFHQALVGAITHLLAIFVPMVTPAL. A helical transmembrane segment spans residues 45 to 65; it reads IVGAALQLSAETTAYLVSMAM. Over 66–74 the chain is Periplasmic; that stretch reads IASGIGTWL. Residues 75–95 form a helical membrane-spanning segment; that stretch reads QVNRYGIVGSGLLSIQSVNFS. The Cytoplasmic portion of the chain corresponds to 96 to 99; it reads FVTV. A helical transmembrane segment spans residues 100–120; the sequence is MIALGSSMKSDGFHEELIMSS. The Periplasmic segment spans residues 121 to 139; it reads LLGVSFVGAFLVVGSSFIL. A helical transmembrane segment spans residues 140–160; the sequence is PYLRRVITPTVSGIVVLMIGL. Over 161–170 the chain is Cytoplasmic; it reads SLIKVGIIDF. Residues 171 to 191 traverse the membrane as a helical segment; that stretch reads GGGFAAKSSGTFGNYEHLGVG. Residues 192–199 are Periplasmic-facing; that stretch reads LLVLIVVI. A helical membrane pass occupies residues 200–220; that stretch reads GFNCCRSPLLRMGGIAIGLCV. Over 221–229 the chain is Cytoplasmic; that stretch reads GYIASLCLG. A helical membrane pass occupies residues 230–250; that stretch reads MVDFSSMRNLPLITIPHPFKY. The Periplasmic segment spans residues 251–277; the sequence is GFSFSFHQFLVVGTIYLLSVLEAVGDI. A helical transmembrane segment spans residues 278 to 298; sequence TATAMVSRRPIQGEEYQSRLK. Residues 299–317 lie on the Cytoplasmic side of the membrane; sequence GGVLADGLVSVIASAVGSL. The chain crosses the membrane as a helical span at residues 318–338; the sequence is PLTTFAQNNGVIQMTGVASRY. At 339–361 the chain is on the periplasmic side; that stretch reads VGRTIAVMLVILGLFPMIGGFFT. The chain crosses the membrane as a helical span at residues 362 to 382; it reads TIPSAVLGGAMTLMFSMIAIA. Position 383 (G383) is a topological domain, cytoplasmic. The helical transmembrane segment at 384–403 threads the bilayer; sequence IRIIITNGLKRRETLIVATS. Residues 404-444 are Periplasmic-facing; it reads LGLGLGVSYDPEIFKILPASIYVLVENPICAGGLTAILLNI. The helical transmembrane segment at 445–465 threads the bilayer; it reads ILPGGYRQENVLPGITSAEEM. Residue D466 is a topological domain, cytoplasmic.

This sequence belongs to the nucleobase:cation symporter-2 (NCS2) (TC 2.A.40) family.

It is found in the cell inner membrane. The catalysed reaction is xanthine(in) + H(+)(in) = xanthine(out) + H(+)(out). Specific, proton motive force-dependent high-affinity transporter for xanthine. This chain is Xanthine permease XanQ (xanQ), found in Escherichia coli O157:H7.